The chain runs to 326 residues: Target of rapamycin complex subunit LST8 (326 aa).

M1 bears the N-acetylmethionine mark. 5 WD repeats span residues M1–T37, H40–S80, G83–Q122, Q126–L165, and E168–V207. At T51 the chain carries Phosphothreonine. K86 is covalently cross-linked (Glycyl lysine isopeptide (Lys-Gly) (interchain with G-Cter in SUMO3)). Glycyl lysine isopeptide (Lys-Gly) (interchain with G-Cter in SUMO3) cross-links involve residues K215, K245, and K261. A WD 6 repeat occupies A218–E257. Residues S268–G309 form a WD 7 repeat. Residue K305 forms a Glycyl lysine isopeptide (Lys-Gly) (interchain with G-Cter in SUMO3); alternate linkage. Glycyl lysine isopeptide (Lys-Gly) (interchain with G-Cter in ubiquitin); alternate cross-links involve residues K305 and K313. Residue K313 forms a Glycyl lysine isopeptide (Lys-Gly) (interchain with G-Cter in SUMO1); alternate linkage.

This sequence belongs to the WD repeat LST8 family. Part of the mechanistic target of rapamycin complex 1 (mTORC1) which contains MTOR, MLST8 and RPTOR. mTORC1 associates with AKT1S1/PRAS40, which inhibits its activity. mTORC1 binds to and is inhibited by FKBP12-rapamycin. Within mTORC1, interacts directly with MTOR and RPTOR. Component of the mechanistic target of rapamycin complex 2 (mTORC2), consisting in two heterotretramers composed of MTOR, MLST8, RICTOR and MAPKAP1/SIN1. Contrary to mTORC1, mTORC2 does not bind to and is not sensitive to FKBP12-rapamycin. mTORC1 and mTORC2 associate with DEPTOR, which regulates their activity. Interacts with RHEB. Interacts with MEAK7. Interacts with SIK3. Interacts with SLC38A7; this interaction promotes the recruitment of mTORC1 to the lysosome and its subsequent activation. Phosphorylation at Thr-51 by CDK1 promotes ubiquitination by the SCF(FBXW7) complex, followed by degradation. Post-translationally, ubiquitination by the SCF(FBXW7) and SCF(FBXW11) complexes following phosphorylation at Thr-51 by CDK1, leads to its degradation by the proteasome. Ubiquitination at Lys-305 and Lys-313 by TRAF2 via 'Lys-63'-linked polyubiquitin chains inhibits formation of the mTORC2 complex, while promoting formation of the mTORC1 complex: ubiquitination disrupts the interaction between MLST8 and MAPKAP1/SIN1 to favor mTORC1 assembly. Deubiquitination at Lys-305 and Lys-313 by OTUD7B promotes MLST8 interaction with MAPKAP1/SIN1, facilitating mTORC2 assembly. In terms of processing, sumoylation with SUMO1, SUMO2 and SUMO3 promotes assembly of both mTORC1 and mTORC2 complexes.

Its subcellular location is the lysosome membrane. The protein resides in the cytoplasm. Subunit of both mTORC1 and mTORC2, which regulates cell growth and survival in response to nutrient and hormonal signals. mTORC1 is activated in response to growth factors or amino acids. In response to nutrients, mTORC1 is recruited to the lysosome membrane and promotes protein, lipid and nucleotide synthesis by phosphorylating several substrates, such as ribosomal protein S6 kinase (RPS6KB1 and RPS6KB2) and EIF4EBP1 (4E-BP1). In the same time, it inhibits catabolic pathways by phosphorylating the autophagy initiation components ULK1 and ATG13, as well as transcription factor TFEB, a master regulators of lysosomal biogenesis and autophagy. The mTORC1 complex is inhibited in response to starvation and amino acid depletion. Within mTORC1, MLST8 interacts directly with MTOR and enhances its kinase activity. In nutrient-poor conditions, stabilizes the MTOR-RPTOR interaction and favors RPTOR-mediated inhibition of MTOR activity. As part of the mTORC2 complex, transduces signals from growth factors to pathways involved in proliferation, cytoskeletal organization, lipogenesis and anabolic output. mTORC2 is also activated by growth factors, but seems to be nutrient-insensitive. In response to growth factors, mTORC2 phosphorylates and activates AGC protein kinase family members, including AKT (AKT1, AKT2 and AKT3), PKC (PRKCA, PRKCB and PRKCE) and SGK1. mTORC2 functions upstream of Rho GTPases to regulate the actin cytoskeleton, probably by activating one or more Rho-type guanine nucleotide exchange factors. mTORC2 promotes the serum-induced formation of stress-fibers or F-actin. mTORC2 plays a critical role in AKT1 activation by mediating phosphorylation of different sites depending on the context, such as 'Thr-450', 'Ser-473', 'Ser-477' or 'Thr-479', facilitating the phosphorylation of the activation loop of AKT1 on 'Thr-308' by PDPK1/PDK1 which is a prerequisite for full activation. mTORC2 regulates the phosphorylation of SGK1 at 'Ser-422'. mTORC2 also modulates the phosphorylation of PRKCA on 'Ser-657'. Within mTORC2, MLST8 acts as a bridge between MAPKAP1/SIN1 and MTOR. In Mus musculus (Mouse), this protein is Target of rapamycin complex subunit LST8.